Here is a 267-residue protein sequence, read N- to C-terminus: Eukaryotic translation initiation factor 3 subunit K (267 aa).

Positions 46 to 233 constitute a PCI domain; that stretch reads FDCYANLALL…EARSEVKSER (188 aa).

It belongs to the eIF-3 subunit K family. In terms of assembly, component of the eukaryotic translation initiation factor 3 (eIF-3) complex.

Its subcellular location is the cytoplasm. Its function is as follows. Component of the eukaryotic translation initiation factor 3 (eIF-3) complex, which is involved in protein synthesis of a specialized repertoire of mRNAs and, together with other initiation factors, stimulates binding of mRNA and methionyl-tRNAi to the 40S ribosome. The eIF-3 complex specifically targets and initiates translation of a subset of mRNAs involved in cell proliferation. The protein is Eukaryotic translation initiation factor 3 subunit K of Aspergillus niger (strain ATCC MYA-4892 / CBS 513.88 / FGSC A1513).